A 23-amino-acid chain; its full sequence is Basic phospholipase A2 CTs-G6 (23 aa).

It depends on Ca(2+) as a cofactor. Contains 7 disulfide bonds. As to expression, expressed by the venom gland.

The protein resides in the secreted. It catalyses the reaction a 1,2-diacyl-sn-glycero-3-phosphocholine + H2O = a 1-acyl-sn-glycero-3-phosphocholine + a fatty acid + H(+). Functionally, snake venom phospholipase A2 (PLA2) that induces local edema a few hours after injection (5-10 ug) in the hind paw. PLA2 catalyzes the calcium-dependent hydrolysis of the 2-acyl groups in 3-sn-phosphoglycerides. The sequence is that of Basic phospholipase A2 CTs-G6 from Trimeresurus stejnegeri (Chinese green tree viper).